The sequence spans 334 residues: DNA-directed RNA polymerase subunit alpha (334 aa).

Residues 1 to 232 (MVREEIAVST…IDLFIPFLHA (232 aa)) are alpha N-terminal domain (alpha-NTD). The interval 268–334 (GIALKCIFID…ILQKHFTIDC (67 aa)) is alpha C-terminal domain (alpha-CTD).

It belongs to the RNA polymerase alpha chain family. As to quaternary structure, in plastids the minimal PEP RNA polymerase catalytic core is composed of four subunits: alpha, beta, beta', and beta''. When a (nuclear-encoded) sigma factor is associated with the core the holoenzyme is formed, which can initiate transcription.

It localises to the plastid. The protein resides in the chloroplast. The enzyme catalyses RNA(n) + a ribonucleoside 5'-triphosphate = RNA(n+1) + diphosphate. In terms of biological role, DNA-dependent RNA polymerase catalyzes the transcription of DNA into RNA using the four ribonucleoside triphosphates as substrates. The protein is DNA-directed RNA polymerase subunit alpha of Chloranthus spicatus (Chulantree).